The primary structure comprises 301 residues: Protein FdhE homolog (301 aa).

Belongs to the FdhE family.

The protein localises to the cytoplasm. Necessary for formate dehydrogenase activity. This is Protein FdhE homolog from Shewanella baltica (strain OS223).